We begin with the raw amino-acid sequence, 321 residues long: Sphingolipid delta(4)-desaturase DES1 (321 aa).

6 helical membrane-spanning segments follow: residues 41 to 61 (PNFK…LFVV), 68 to 88 (WLIV…MLAV), 107 to 127 (ILGF…FKKY), 157 to 177 (FGKF…PLII), 187 to 206 (IINT…FLGW), and 208 to 230 (PLAY…GHFI).

The protein belongs to the fatty acid desaturase type 1 family. DEGS subfamily. As to expression, testes.

It is found in the endoplasmic reticulum membrane. The protein localises to the membrane. The protein resides in the mitochondrion. It carries out the reaction an N-acylsphinganine + 2 Fe(II)-[cytochrome b5] + O2 + 2 H(+) = an N-acylsphing-4-enine + 2 Fe(III)-[cytochrome b5] + 2 H2O. The catalysed reaction is an N-acyleicosasphinganine + 2 Fe(II)-[cytochrome b5] + O2 + 2 H(+) = an N-acyleicosasphing-4-enine + 2 Fe(III)-[cytochrome b5] + 2 H2O. It participates in sphingolipid metabolism. Its function is as follows. Has sphingolipid-delta-4-desaturase activity. Converts sphinganine-containing sphingolipids (such as N-acylsphinganines or dihydroceramides) into sphingolipids containing the delta-4-desaturated sphingoid base (E)-sphing-4-enine (such as N-acylsphing-4-enines or ceramides), which are required for many different functions (structural functions as well as signaling). Required to initiate spermatid differentiation among other signals. Required for central spindle assembly and cytokinesis during male meiosis, may act as part of an anchoring mechanism that links membrane-bounded cellular compartments to components of the cytoskeleton. The sequence is that of Sphingolipid delta(4)-desaturase DES1 from Drosophila melanogaster (Fruit fly).